A 424-amino-acid polypeptide reads, in one-letter code: Protein ORF114 (424 aa).

The protein localises to the host cytoplasm. Functionally, plays a role in per os infectivity in vivo. Facilitates embedding of occlusion-derived viruses (ODVs) into occlusion bodies (OBs). In Lepidoptera (butterflies and moths), this protein is Protein ORF114.